Here is a 443-residue protein sequence, read N- to C-terminus: Histidinol dehydrogenase (443 aa).

Residues Tyr133, Gln191, and Asn214 each contribute to the NAD(+) site. Substrate-binding residues include Ser240, Gln262, and His265. 2 residues coordinate Zn(2+): Gln262 and His265. Catalysis depends on proton acceptor residues Glu329 and His330. Substrate is bound by residues His330, Asp363, Glu417, and His422. Asp363 contacts Zn(2+). His422 is a Zn(2+) binding site.

It belongs to the histidinol dehydrogenase family. Homodimer. The cofactor is Zn(2+).

It catalyses the reaction L-histidinol + 2 NAD(+) + H2O = L-histidine + 2 NADH + 3 H(+). The protein operates within amino-acid biosynthesis; L-histidine biosynthesis; L-histidine from 5-phospho-alpha-D-ribose 1-diphosphate: step 9/9. In terms of biological role, catalyzes the sequential NAD-dependent oxidations of L-histidinol to L-histidinaldehyde and then to L-histidine. The polypeptide is Histidinol dehydrogenase (Yersinia pestis).